The chain runs to 1100 residues: Lysylphosphatidylglycerol biosynthesis bifunctional protein LysX (1100 aa).

Residues M1–D601 are phosphatidylglycerol lysyltransferase. The next 7 membrane-spanning stretches (helical) occupy residues V18–V38, F60–A80, I84–L104, F112–L132, L154–G174, V206–V226, and A314–F332. The lysine--tRNA ligase stretch occupies residues G602–R1100. A DNA-binding region (OB) is located at residues V661–I739. Residues D1012 and E1019 each coordinate Mg(2+).

The protein in the N-terminal section; belongs to the LPG synthetase family. It in the C-terminal section; belongs to the class-II aminoacyl-tRNA synthetase family. It depends on Mg(2+) as a cofactor.

It localises to the cell membrane. It carries out the reaction tRNA(Lys) + L-lysine + ATP = L-lysyl-tRNA(Lys) + AMP + diphosphate. The catalysed reaction is L-lysyl-tRNA(Lys) + a 1,2-diacyl-sn-glycero-3-phospho-(1'-sn-glycerol) = a 1,2-diacyl-sn-glycero-3-phospho-1'-(3'-O-L-lysyl)-sn-glycerol + tRNA(Lys). Functionally, catalyzes the production of L-lysyl-tRNA(Lys)transfer and the transfer of a lysyl group from L-lysyl-tRNA(Lys) to membrane-bound phosphatidylglycerol (PG), which produces lysylphosphatidylglycerol (LPG), one of the components of the bacterial membrane with a positive net charge. LPG synthesis contributes to the resistance to cationic antimicrobial peptides (CAMPs) and likely protects M.tuberculosis against the CAMPs produced by competiting microorganisms (bacteriocins). In fact, the modification of anionic phosphatidylglycerol with positively charged L-lysine results in repulsion of the peptides. The polypeptide is Lysylphosphatidylglycerol biosynthesis bifunctional protein LysX (lysX) (Mycolicibacterium vanbaalenii (strain DSM 7251 / JCM 13017 / BCRC 16820 / KCTC 9966 / NRRL B-24157 / PYR-1) (Mycobacterium vanbaalenii)).